A 255-amino-acid chain; its full sequence is Probable cyclic nucleotide phosphodiesterase syc0937_d (255 aa).

Fe cation contacts are provided by Asp19, His21, Asp59, Asn89, His157, His196, and His198. AMP contacts are provided by residues His21, Asp59, and 89 to 90 (NH). Residue His198 coordinates AMP.

It belongs to the cyclic nucleotide phosphodiesterase class-III family. It depends on Fe(2+) as a cofactor.

The sequence is that of Probable cyclic nucleotide phosphodiesterase syc0937_d from Synechococcus sp. (strain ATCC 27144 / PCC 6301 / SAUG 1402/1) (Anacystis nidulans).